The sequence spans 127 residues: Protein P6 (127 aa).

Its subcellular location is the virion membrane. The protein is Protein P6 (VI) of Pseudoalteromonas espejiana (Bacteriophage PM2).